The sequence spans 741 residues: Polyribonucleotide nucleotidyltransferase (741 aa).

Residues Asp-489 and Asp-495 each contribute to the Mg(2+) site. The region spanning 556–615 (PKIDSIQIPVDKIKVVIGKGGETIDKIIAETGVTIDIDEEGLVQIFSSDQDAIDRAKTII) is the KH domain. Positions 625–693 (GEVYTVPVVR…EKGRVDASIK (69 aa)) constitute an S1 motif domain. A disordered region spans residues 696–741 (LPKPEKNEDGENGEEHRHCCCSHHKPDHHSESMEAPKKSDESETKE). Basic and acidic residues-rich tracts occupy residues 698 to 713 (KPEK…EHRH) and 723 to 741 (HHSE…ETKE).

Belongs to the polyribonucleotide nucleotidyltransferase family. Mg(2+) is required as a cofactor.

The protein resides in the cytoplasm. It carries out the reaction RNA(n+1) + phosphate = RNA(n) + a ribonucleoside 5'-diphosphate. Involved in mRNA degradation. Catalyzes the phosphorolysis of single-stranded polyribonucleotides processively in the 3'- to 5'-direction. The polypeptide is Polyribonucleotide nucleotidyltransferase (Streptococcus thermophilus (strain ATCC BAA-491 / LMD-9)).